Here is a 417-residue protein sequence, read N- to C-terminus: Serine--tRNA ligase (417 aa).

224-226 is a binding site for L-serine; sequence TSE. ATP contacts are provided by residues 255-257 and Val271; that span reads RRE. An L-serine-binding site is contributed by Glu278. ATP is bound at residue 342–345; sequence ELTS. Thr377 contacts L-serine.

It belongs to the class-II aminoacyl-tRNA synthetase family. Type-1 seryl-tRNA synthetase subfamily. Homodimer. The tRNA molecule binds across the dimer.

The protein resides in the cytoplasm. It carries out the reaction tRNA(Ser) + L-serine + ATP = L-seryl-tRNA(Ser) + AMP + diphosphate + H(+). The enzyme catalyses tRNA(Sec) + L-serine + ATP = L-seryl-tRNA(Sec) + AMP + diphosphate + H(+). Its pathway is aminoacyl-tRNA biosynthesis; selenocysteinyl-tRNA(Sec) biosynthesis; L-seryl-tRNA(Sec) from L-serine and tRNA(Sec): step 1/1. In terms of biological role, catalyzes the attachment of serine to tRNA(Ser). Is also able to aminoacylate tRNA(Sec) with serine, to form the misacylated tRNA L-seryl-tRNA(Sec), which will be further converted into selenocysteinyl-tRNA(Sec). The sequence is that of Serine--tRNA ligase from Mycobacterium leprae (strain TN).